A 306-amino-acid polypeptide reads, in one-letter code: Maltose operon periplasmic protein (306 aa).

A signal peptide (or 26) is located at residues 1 to 22 (MKMNKSLIVLCLSAGLLASAPG).

It to S.typhimurium MalM.

It is found in the periplasm. Its function is as follows. Not yet known. Might function in the uptake of a still unidentified substrate. The protein is Maltose operon periplasmic protein (malM) of Escherichia coli (strain K12).